We begin with the raw amino-acid sequence, 261 residues long: Bidirectional sugar transporter SWEET1b (261 aa).

Residues 1-6 (MEDLAK) are Extracellular-facing. A helical membrane pass occupies residues 7–27 (FLFGVSGNVIALFLFLSPVPT). In terms of domain architecture, MtN3/slv 1 spans 7–95 (FLFGVSGNVI…VVFLVFASTH (89 aa)). Residues 28–42 (FWRIIRRKSTEDFSG) are Cytoplasmic-facing. A helical membrane pass occupies residues 43–63 (VPYNMTLINCLLSAWYGLPFV). The Extracellular portion of the chain corresponds to 64-71 (SPNNILVS). Residues 72–92 (TINGAGAVIETAYVVVFLVFA) form a helical membrane-spanning segment. Topologically, residues 93-101 (STHKTRLRT) are cytoplasmic. The chain crosses the membrane as a helical span at residues 102–122 (LGLAAAVASVFAAVALVSLLA). At 123-129 (LHGQHRK) the chain is on the extracellular side. Residues 130–150 (LLCGVAATVCSICMYASPLSI) traverse the membrane as a helical segment. Residues 133 to 215 (GVAATVCSIC…VLYAIYRNNK (83 aa)) enclose the MtN3/slv 2 domain. The Cytoplasmic segment spans residues 151-164 (MRLVIKTKSVEYMP). A helical transmembrane segment spans residues 165-185 (FLMSLAVFLCGTSWFIYGLLG). Over 186–189 (RDPF) the chain is Extracellular. A helical membrane pass occupies residues 190 to 210 (VTIPNGCGSFLGAVQLVLYAI). The Cytoplasmic segment spans residues 211–261 (YRNNKGAGGGSGGKQAGDDDVEMAEGRNNKVADGGAADDDSTAGGKAGTEV). A disordered region spans residues 218 to 261 (GGGSGGKQAGDDDVEMAEGRNNKVADGGAADDDSTAGGKAGTEV).

The protein belongs to the SWEET sugar transporter family. Forms homodimers. As to expression, highly expressed in leaves. Expressed at very low levels in roots, stems and panicles.

The protein resides in the cell membrane. It catalyses the reaction D-glucose(out) = D-glucose(in). It carries out the reaction D-galactose(in) = D-galactose(out). Functionally, mediates transport of sugars across the plasma membrane. Can transport glucose and galactose, but not fructose, mannose and sucrose. The polypeptide is Bidirectional sugar transporter SWEET1b (SWEET1B) (Oryza sativa subsp. japonica (Rice)).